The following is a 197-amino-acid chain: Probable molybdenum cofactor guanylyltransferase (197 aa).

GTP is bound by residues 12–14 (LAG), K24, D71, and D103. D103 contributes to the Mg(2+) binding site.

The protein belongs to the MobA family. Mg(2+) is required as a cofactor.

It localises to the cytoplasm. The catalysed reaction is Mo-molybdopterin + GTP + H(+) = Mo-molybdopterin guanine dinucleotide + diphosphate. Its function is as follows. Transfers a GMP moiety from GTP to Mo-molybdopterin (Mo-MPT) cofactor (Moco or molybdenum cofactor) to form Mo-molybdopterin guanine dinucleotide (Mo-MGD) cofactor. The sequence is that of Probable molybdenum cofactor guanylyltransferase from Mycolicibacterium paratuberculosis (strain ATCC BAA-968 / K-10) (Mycobacterium paratuberculosis).